Reading from the N-terminus, the 215-residue chain is Meiotic chromosome segregation protein P8B7.28c (215 aa).

The tract at residues 159–202 is disordered; that stretch reads TINSEYADDVSDNTDEERTESKGQQESNSAEEYDDDDSDEDRME. Acidic residues-rich tracts occupy residues 164 to 176 and 187 to 201; these read YADD…DEER and SAEE…EDRM.

Its subcellular location is the nucleus. The protein localises to the nucleolus. Its function is as follows. Required for meiotic chromosome segregation. This is Meiotic chromosome segregation protein P8B7.28c from Schizosaccharomyces pombe (strain 972 / ATCC 24843) (Fission yeast).